We begin with the raw amino-acid sequence, 340 residues long: MSSKLVNSLRLTFLSFLGIVSTSLDAMPAGNPAFPVIPGINVEQKSACAFDLCNSYDVLSALSGNLKLCFCGDYIFSEEAQVKDVPVVTSVTTSGVGPSPTITSTTKNRNFDLVDCSLSANCVAAAFSLPDRTMSAIPLFDASFEVKIGGLKQYYRLPMNAYRDFTSDPLNSESEVTDGLIEVQSNYGFVWDVSLKKVLWKDGVSFVGVGVDYRHASCPIDYIIANSQANPEVFIADSDGKLSLKEWSVCLGLTTYVNDYILPYVAFSVGNVSREAPDNSFKKLEERFTNLKFKVRKITSSHRGNICIGATNYIADNFFYNVEGRWGSQRAVNISGGFQF.

The N-terminal stretch at 1-26 is a signal peptide; sequence MSSKLVNSLRLTFLSFLGIVSTSLDA.

Belongs to the chlamydial OMP family.

The protein resides in the cell outer membrane. This chain is Outer membrane protein B (ompB), found in Chlamydia muridarum (strain MoPn / Nigg).